The primary structure comprises 189 residues: dCTP deaminase (189 aa).

Residues 112–117, 136–138, Gln157, Tyr171, and Gln181 contribute to the dCTP site; these read KSTYAR and TLE. The active-site Proton donor/acceptor is the Glu138.

Belongs to the dCTP deaminase family. As to quaternary structure, homotrimer.

It catalyses the reaction dCTP + H2O + H(+) = dUTP + NH4(+). It functions in the pathway pyrimidine metabolism; dUMP biosynthesis; dUMP from dCTP (dUTP route): step 1/2. Functionally, catalyzes the deamination of dCTP to dUTP. The polypeptide is dCTP deaminase (Burkholderia mallei (strain NCTC 10247)).